A 180-amino-acid chain; its full sequence is Large ribosomal subunit protein uL6 (180 aa).

The tract at residues 158-180 (YSGKGISYKGEKIRRKEGKTASK) is disordered.

Belongs to the universal ribosomal protein uL6 family. Part of the 50S ribosomal subunit.

In terms of biological role, this protein binds to the 23S rRNA, and is important in its secondary structure. It is located near the subunit interface in the base of the L7/L12 stalk, and near the tRNA binding site of the peptidyltransferase center. This is Large ribosomal subunit protein uL6 from Mycoplasmopsis synoviae (strain 53) (Mycoplasma synoviae).